Consider the following 386-residue polypeptide: Succinate--CoA ligase [ADP-forming] subunit beta (386 aa).

An ATP-grasp domain is found at 9–244; that stretch reads KELLKQFGVP…LDEEDPAEIE (236 aa). ATP is bound by residues K46, 53-55, E99, A102, and E107; that span reads GRG. Mg(2+) is bound by residues N199 and D213. Residues N264 and 321 to 323 contribute to the substrate site; that span reads GIM.

It belongs to the succinate/malate CoA ligase beta subunit family. In terms of assembly, heterotetramer of two alpha and two beta subunits. The cofactor is Mg(2+).

The catalysed reaction is succinate + ATP + CoA = succinyl-CoA + ADP + phosphate. It catalyses the reaction GTP + succinate + CoA = succinyl-CoA + GDP + phosphate. It participates in carbohydrate metabolism; tricarboxylic acid cycle; succinate from succinyl-CoA (ligase route): step 1/1. Functionally, succinyl-CoA synthetase functions in the citric acid cycle (TCA), coupling the hydrolysis of succinyl-CoA to the synthesis of either ATP or GTP and thus represents the only step of substrate-level phosphorylation in the TCA. The beta subunit provides nucleotide specificity of the enzyme and binds the substrate succinate, while the binding sites for coenzyme A and phosphate are found in the alpha subunit. This Bordetella petrii (strain ATCC BAA-461 / DSM 12804 / CCUG 43448) protein is Succinate--CoA ligase [ADP-forming] subunit beta.